A 513-amino-acid polypeptide reads, in one-letter code: Putative thymidine phosphorylase (513 aa).

This sequence belongs to the thymidine/pyrimidine-nucleoside phosphorylase family. Type 2 subfamily.

It catalyses the reaction thymidine + phosphate = 2-deoxy-alpha-D-ribose 1-phosphate + thymine. In Bradyrhizobium diazoefficiens (strain JCM 10833 / BCRC 13528 / IAM 13628 / NBRC 14792 / USDA 110), this protein is Putative thymidine phosphorylase.